Here is a 1330-residue protein sequence, read N- to C-terminus: Sister chromatid cohesion protein PDS5 homolog A (1330 aa).

The stretch at 387–423 is one HEAT repeat; sequence SLVNDQLLGFVRERTLDKRWRVRKEAMMGLAQLYKKY. The disordered stretch occupies residues 1138–1330; that stretch reads VNKPLSATGR…AAQRQIDLQR (193 aa). A compositionally biased stretch (low complexity) spans 1160–1171; the sequence is SNISVNSELSSS. Positions 1216–1225 are enriched in polar residues; the sequence is SDQATQGNST.

The protein belongs to the PDS5 family. Interacts with the cohesin complex. Binds chromatin in a cohesin-dependent manner.

It localises to the nucleus. Its function is as follows. May regulate sister chromatid cohesion during mitosis and couple it to DNA replication. The sequence is that of Sister chromatid cohesion protein PDS5 homolog A from Gallus gallus (Chicken).